Consider the following 480-residue polypeptide: ATP synthase subunit beta 1 (480 aa).

Position 154 to 161 (154 to 161 (GGAGVGKT)) interacts with ATP.

It belongs to the ATPase alpha/beta chains family. F-type ATPases have 2 components, CF(1) - the catalytic core - and CF(0) - the membrane proton channel. CF(1) has five subunits: alpha(3), beta(3), gamma(1), delta(1), epsilon(1). CF(0) has four main subunits: a(1), b(1), b'(1) and c(9-12).

The protein resides in the cell inner membrane. It carries out the reaction ATP + H2O + 4 H(+)(in) = ADP + phosphate + 5 H(+)(out). In terms of biological role, produces ATP from ADP in the presence of a proton gradient across the membrane. The catalytic sites are hosted primarily by the beta subunits. This is ATP synthase subunit beta 1 from Chlorobaculum tepidum (strain ATCC 49652 / DSM 12025 / NBRC 103806 / TLS) (Chlorobium tepidum).